The primary structure comprises 95 residues: Acylphosphatase (95 aa).

The region spanning 5-93 is the Acylphosphatase-like domain; it reads RAHLYIKGKV…GEFQDFRILP (89 aa). Active-site residues include Arg-20 and Asn-38.

It belongs to the acylphosphatase family.

It catalyses the reaction an acyl phosphate + H2O = a carboxylate + phosphate + H(+). This chain is Acylphosphatase (acyP), found in Pyrobaculum islandicum (strain DSM 4184 / JCM 9189 / GEO3).